A 514-amino-acid polypeptide reads, in one-letter code: MESTPLQYPLGLKTDSLVKQVSEVLKSLTVTKAVGAFIVLFIIIPKVFDFLRNLFSPVTSIPGPLINKFSPWPLEIATFKGKSHRFARALHRKYGPIVVLAPGMISIGDSKEIKRIIQSEDWVKSEAIYGNFRQDFHRPTLLAFTEKKAYSRRKRMLSSMFGIRYIRSLEPLMKSCVDAGVAHLNKLCDNPSKSTIINLQHFIHGLAIDTIGVTTFGGSFHVVENGSHPLPSRLKAGMKISAVMQLISWIKYIPFLPKRDPYIEKFTFDIVDKRRKEAGAVKHQDLLQHLVDVCDDSPGSEFRTSDVQDESVILLAAGSETTANAELFTVIQLLKHPEKMKKLIAEVDKWYPPSEPDRATECAYSQTGMTYLQACIDETMRLIPGQATGSPREASKQEVLLGYKIPRGTTVFPNTQEAHLDGSIWEQPEKYIPERWLEIYSRNQTSAMPYWPFSAGSRICVGKNFAFQEMHISLTTLLRKFTFEYVPGQDETTVFRIAQQLEADSYKVRVKKRF.

The chain crosses the membrane as a helical span at residues 28–48; that stretch reads LTVTKAVGAFIVLFIIIPKVF. Asn-225 and Asn-443 each carry an N-linked (GlcNAc...) asparagine glycan. Heme is bound at residue Cys-460.

Belongs to the cytochrome P450 family. The cofactor is heme.

Its subcellular location is the membrane. The protein operates within mycotoxin biosynthesis. Its function is as follows. Cytochrome P450 monooxygenase; part of the gene cluster that mediates the biosynthesis of the mycotoxin fusarin C. Within the cluster, FUS1, FUS2, FUS8 and FUS9 are sufficient for fusarin production. The roles of the other FUS members are yet undetermined. The fusarin C synthetase FUS1 is responsible for the condensation of one acetyl-coenzyme A (CoA) unit with six malonyl-CoA units and the amide linkage of the arising heptaketide and homoserine, subsequently releasing the first intermediate, prefusarin, as an alcohol with an open ring structure. The cytochrome P450 monooxygenase FUS8 participates in multiple oxidation processes at carbon C-20 and is able to use the FUS1 product as substrate, resulting in formation of 20-hydroxy-prefusarin. This reaction seems to be essential before the 2-pyrrolidone ring closure can be catalyzed by FUS2, generating 20-hydroxy-fusarin. FUS8 is able to further oxidizes carbon C-20 after ring closure, resulting in the formation of carboxy-fusarin C. As the last step, FUS9 methylates the hydroxyl group at C-21 to generate fusarin C. Fusarin C can then rearrange to epi-fusarin C, the (z)-isomers, and fusarin A and fusarin D. The chain is Cytochrome P450 monooxygenase FUS8 from Gibberella moniliformis (strain M3125 / FGSC 7600) (Maize ear and stalk rot fungus).